Consider the following 446-residue polypeptide: Casein kinase I homolog 1 (446 aa).

Residues 12–274 (YKVGRRIGEG…FDATPDYDYL (263 aa)) form the Protein kinase domain. ATP-binding positions include 18–26 (IGEGSFGVI) and Lys41. Asp131 functions as the Proton acceptor in the catalytic mechanism. Residues 308–430 (KSRNAETENQ…ETEAPKKKKS (123 aa)) form a disordered region. Position 329 is a phosphoserine (Ser329). The span at 332-345 (PALQNHASTQNVVS) shows a compositional bias: polar residues. A compositionally biased stretch (basic and acidic residues) spans 346-355 (KRSDYEKPFA). Residues 360-397 (NSASDSAEPNQNSLPNPPTETKATTTVPDRSGLATNQP) show a composition bias toward polar residues. A compositionally biased stretch (basic and acidic residues) spans 401–412 (DVHDSSEERVTR).

Belongs to the protein kinase superfamily. CK1 Ser/Thr protein kinase family. Casein kinase I subfamily.

The protein localises to the cytoplasm. The enzyme catalyses L-seryl-[protein] + ATP = O-phospho-L-seryl-[protein] + ADP + H(+). It catalyses the reaction L-threonyl-[protein] + ATP = O-phospho-L-threonyl-[protein] + ADP + H(+). Casein kinases are operationally defined by their preferential utilization of acidic proteins such as caseins as substrates. The protein is Casein kinase I homolog 1 (cki1) of Schizosaccharomyces pombe (strain 972 / ATCC 24843) (Fission yeast).